Consider the following 64-residue polypeptide: Large ribosomal subunit protein bL32 (64 aa).

The span at 1–15 (MAVPKRKVSKSRRDS) shows a compositional bias: basic residues. The tract at residues 1–21 (MAVPKRKVSKSRRDSRRAQTF) is disordered.

It belongs to the bacterial ribosomal protein bL32 family.

This is Large ribosomal subunit protein bL32 from Symbiobacterium thermophilum (strain DSM 24528 / JCM 14929 / IAM 14863 / T).